A 317-amino-acid polypeptide reads, in one-letter code: L-lactate dehydrogenase 1 (317 aa).

NAD(+) contacts are provided by residues Val-17, Asp-38, Lys-43, Tyr-69, and 83–84 (GA). Gln-86 and Arg-92 together coordinate substrate. Residues Ser-105, 122 to 124 (ATN), and Ser-147 contribute to the NAD(+) site. A substrate-binding site is contributed by 124 to 127 (NPVD). Residue 152 to 155 (DSAR) participates in substrate binding. Residue His-179 is the Proton acceptor of the active site. Position 223 is a phosphotyrosine (Tyr-223). Thr-232 provides a ligand contact to substrate.

Belongs to the LDH/MDH superfamily. LDH family. In terms of assembly, homotetramer.

The protein resides in the cytoplasm. The enzyme catalyses (S)-lactate + NAD(+) = pyruvate + NADH + H(+). It functions in the pathway fermentation; pyruvate fermentation to lactate; (S)-lactate from pyruvate: step 1/1. Its function is as follows. Catalyzes the conversion of lactate to pyruvate (Potential). Appears to be the primary factor that allows S.aureus growth during nitrosative stress in both aerobically and anaerobically cultured cells. The polypeptide is L-lactate dehydrogenase 1 (Staphylococcus aureus (strain JH1)).